The chain runs to 419 residues: Gamma-glutamyl phosphate reductase (419 aa).

Belongs to the gamma-glutamyl phosphate reductase family.

The protein localises to the cytoplasm. It catalyses the reaction L-glutamate 5-semialdehyde + phosphate + NADP(+) = L-glutamyl 5-phosphate + NADPH + H(+). The protein operates within amino-acid biosynthesis; L-proline biosynthesis; L-glutamate 5-semialdehyde from L-glutamate: step 2/2. Functionally, catalyzes the NADPH-dependent reduction of L-glutamate 5-phosphate into L-glutamate 5-semialdehyde and phosphate. The product spontaneously undergoes cyclization to form 1-pyrroline-5-carboxylate. The sequence is that of Gamma-glutamyl phosphate reductase from Yersinia pestis.